The following is a 202-amino-acid chain: Response regulator RamR (202 aa).

Residues Met1 to Arg121 are response regulatory. Positions Leu135 to Gly200 constitute an HTH luxR-type domain. Residues Ile159–Ala178 constitute a DNA-binding region (H-T-H motif).

Homodimer, in the absence of phosphorylation. Post-translationally, may be phosphorylated by an unknown kinase, probably on Asp-56.

Functionally, a transcription factor required for aerial hyphae formation on rich medium. Activates transcription of ramC. Might be part of a two-component regulatory system. Binds the promoter of ramC. Non-phosphorylated protein cooperatively binds multiple sites in the ramC promoter. Has not been seen to autophosphorylate using the small molecule phosphodonors phosphoramidate, acetyl phosphate or carbamoyl phosphate. Upon low expression suppresses the bald (bld, no aerial hyphae) phenotype of citA but not bldJ mutants; higher expression also suppresses the bldJ mutant as well as several other bld mutations, inducing SapB production even on media where SapB is normally not produced. Expression of the ram locus (ramA, ramB and ramR) induces rapid aerial mycelium formation in S.lividans. Overexpression suppresses the no aerial hyphae phenotype of a chaplin-negative strain, probably by inducing expression of SapB. Overexpression of RamR show there are about 280 genes having at least a threefold increase or fourfold decrease in RNA abundance versus wild-type including gene cluster SCO4072-SCO4075. The chain is Response regulator RamR from Streptomyces coelicolor (strain ATCC BAA-471 / A3(2) / M145).